Consider the following 296-residue polypeptide: Light-independent protochlorophyllide reductase iron-sulfur ATP-binding protein (296 aa).

ATP-binding positions include 39-44 (GIGKST) and Lys-68. Residue Ser-43 coordinates Mg(2+). The [4Fe-4S] cluster site is built by Cys-124 and Cys-158. 209-210 (NR) provides a ligand contact to ATP.

It belongs to the NifH/BchL/ChlL family. Homodimer. Protochlorophyllide reductase is composed of three subunits; ChlL, ChlN and ChlB. The cofactor is [4Fe-4S] cluster.

The catalysed reaction is chlorophyllide a + oxidized 2[4Fe-4S]-[ferredoxin] + 2 ADP + 2 phosphate = protochlorophyllide a + reduced 2[4Fe-4S]-[ferredoxin] + 2 ATP + 2 H2O. It functions in the pathway porphyrin-containing compound metabolism; chlorophyll biosynthesis (light-independent). Its function is as follows. Component of the dark-operative protochlorophyllide reductase (DPOR) that uses Mg-ATP and reduced ferredoxin to reduce ring D of protochlorophyllide (Pchlide) to form chlorophyllide a (Chlide). This reaction is light-independent. The L component serves as a unique electron donor to the NB-component of the complex, and binds Mg-ATP. The polypeptide is Light-independent protochlorophyllide reductase iron-sulfur ATP-binding protein (Synechococcus sp. (strain WH7803)).